Consider the following 489-residue polypeptide: Putative general secretion pathway protein A (489 aa).

ATP is bound at residue 26–33 (GEAGSGKT). A helical membrane pass occupies residues 237–257 (MQLAVVMSGTIIALTCGWLLL).

The protein belongs to the ExeA family.

Its subcellular location is the cell membrane. Its function is as follows. May play a regulatory role under conditions of derepressed gsp gene expression. This Escherichia coli (strain K12) protein is Putative general secretion pathway protein A (gspA).